Here is a 299-residue protein sequence, read N- to C-terminus: MGISMKDIKELRSRTGAGVLDCKKALAETNGDIDAAVEYLREKGIAAAAKKAGRVAAEGAVNVYISDDRKKGVIVEVNSETDFVAKNDNFKDLVNKISEHLMQSDANSVDEVLKETWYQDSEKDVNTIIKEAIASIGENINLRRFEKYETNGFLQGYIHMGGKIGVLVDIDGEFNDSTRKVAKDIAMHIAAINPRYLSRDDISEEVINKEKEIYKEQMLNEGKPEHIIGQIVKGKMEKYYSEVCLLDQAFVRDEDITVGKLIEDNGLKINGFTRFELGEGIEKEEEDFAAEVMKEVNKK.

The interval 81–84 (TDFV) is involved in Mg(2+) ion dislocation from EF-Tu.

Belongs to the EF-Ts family.

The protein resides in the cytoplasm. In terms of biological role, associates with the EF-Tu.GDP complex and induces the exchange of GDP to GTP. It remains bound to the aminoacyl-tRNA.EF-Tu.GTP complex up to the GTP hydrolysis stage on the ribosome. This chain is Elongation factor Ts, found in Halothermothrix orenii (strain H 168 / OCM 544 / DSM 9562).